The chain runs to 445 residues: Argininosuccinate synthase (445 aa).

Residues 17-25 (AFSGGLDTS) and Ala43 each bind ATP. An L-citrulline-binding site is contributed by Tyr99. ATP is bound by residues Gly129 and Thr131. The L-aspartate site is built by Thr131, Asn135, and Asp136. Asn135 contacts L-citrulline. Asp136 lines the ATP pocket. L-citrulline-binding residues include Arg139 and Ser192. Residue Asp194 coordinates ATP. 3 residues coordinate L-citrulline: Thr201, Glu203, and Glu280.

This sequence belongs to the argininosuccinate synthase family. Type 2 subfamily. As to quaternary structure, homotetramer.

Its subcellular location is the cytoplasm. The enzyme catalyses L-citrulline + L-aspartate + ATP = 2-(N(omega)-L-arginino)succinate + AMP + diphosphate + H(+). Its pathway is amino-acid biosynthesis; L-arginine biosynthesis; L-arginine from L-ornithine and carbamoyl phosphate: step 2/3. The protein is Argininosuccinate synthase of Burkholderia cenocepacia (strain ATCC BAA-245 / DSM 16553 / LMG 16656 / NCTC 13227 / J2315 / CF5610) (Burkholderia cepacia (strain J2315)).